The chain runs to 473 residues: ATP synthase subunit beta (473 aa).

G158–T165 serves as a coordination point for ATP.

Belongs to the ATPase alpha/beta chains family. In terms of assembly, F-type ATPases have 2 components, CF(1) - the catalytic core - and CF(0) - the membrane proton channel. CF(1) has five subunits: alpha(3), beta(3), gamma(1), delta(1), epsilon(1). CF(0) has three main subunits: a(1), b(2) and c(9-12). The alpha and beta chains form an alternating ring which encloses part of the gamma chain. CF(1) is attached to CF(0) by a central stalk formed by the gamma and epsilon chains, while a peripheral stalk is formed by the delta and b chains.

Its subcellular location is the cell membrane. It carries out the reaction ATP + H2O + 4 H(+)(in) = ADP + phosphate + 5 H(+)(out). Its function is as follows. Produces ATP from ADP in the presence of a proton gradient across the membrane. The catalytic sites are hosted primarily by the beta subunits. The polypeptide is ATP synthase subunit beta (Anoxybacillus flavithermus (strain DSM 21510 / WK1)).